A 149-amino-acid chain; its full sequence is 3-dehydroquinate dehydratase (149 aa).

Catalysis depends on Y26, which acts as the Proton acceptor. Substrate-binding residues include N77, H83, and D90. H103 acts as the Proton donor in catalysis. Substrate-binding positions include 104–105 and R114; that span reads LS.

This sequence belongs to the type-II 3-dehydroquinase family. As to quaternary structure, homododecamer.

The enzyme catalyses 3-dehydroquinate = 3-dehydroshikimate + H2O. It functions in the pathway metabolic intermediate biosynthesis; chorismate biosynthesis; chorismate from D-erythrose 4-phosphate and phosphoenolpyruvate: step 3/7. Functionally, catalyzes a trans-dehydration via an enolate intermediate. In Haemophilus influenzae (strain PittEE), this protein is 3-dehydroquinate dehydratase.